A 114-amino-acid chain; its full sequence is Transmembrane protein 14DP (114 aa).

The next 4 membrane-spanning stretches (helical) occupy residues 8-28 (LVPL…GGIV), 36-56 (APSL…AYQL), 63-80 (VWDF…IMGM), and 83-103 (YYYG…LMAA).

Belongs to the TMEM14 family.

Its subcellular location is the membrane. The protein is Transmembrane protein 14DP (TMEM14DP) of Homo sapiens (Human).